A 232-amino-acid polypeptide reads, in one-letter code: Expansin-YoaJ (232 aa).

A signal peptide spans 1 to 25 (MKKIMSAFVGMVLLTIFCFSPQASA). One can recognise an Expansin-like EG45 domain in the interval 58-127 (ITAINPADLN…MKDGKINIKW (70 aa)).

Its subcellular location is the secreted. It is found in the cell wall. Functionally, may promote colonization of plant roots. May cause loosening and extension of plant cell walls by disrupting non-covalent bonding between cellulose microfibrils and matrix glucans. Has very low expansin activity (in vitro). No enzymatic activity has been found. Binds to peptidoglycan and to plant cell walls. The polypeptide is Expansin-YoaJ (yoaJ) (Bacillus subtilis (strain 168)).